The primary structure comprises 145 residues: D-aminoacyl-tRNA deacylase (145 aa).

Positions 137 to 138 (GP) match the Gly-cisPro motif, important for rejection of L-amino acids motif.

It belongs to the DTD family. As to quaternary structure, homodimer.

It is found in the cytoplasm. It catalyses the reaction glycyl-tRNA(Ala) + H2O = tRNA(Ala) + glycine + H(+). It carries out the reaction a D-aminoacyl-tRNA + H2O = a tRNA + a D-alpha-amino acid + H(+). In terms of biological role, an aminoacyl-tRNA editing enzyme that deacylates mischarged D-aminoacyl-tRNAs. Also deacylates mischarged glycyl-tRNA(Ala), protecting cells against glycine mischarging by AlaRS. Acts via tRNA-based rather than protein-based catalysis; rejects L-amino acids rather than detecting D-amino acids in the active site. By recycling D-aminoacyl-tRNA to D-amino acids and free tRNA molecules, this enzyme counteracts the toxicity associated with the formation of D-aminoacyl-tRNA entities in vivo and helps enforce protein L-homochirality. This is D-aminoacyl-tRNA deacylase from Lactobacillus delbrueckii subsp. bulgaricus (strain ATCC BAA-365 / Lb-18).